The primary structure comprises 266 residues: MVDRLVNSEVNSRRMANVEQCFGKMGEQLSVFGRVLVGEGVLVKMCRKKPKQRQFFLFNDILVYGNIVISKKRYNKQRILRLEGVQVEDLEDDGIEKHGWIIKTPAKSFAVYAATETEKREWMLHIERCVTDLLERGNKQAATAHAAVWVPDGEAVKCMVCGKTQFNLVQRRHHCRNCGRVVCGACSSRTFRIDNVHKKPVRVCDHCFDSLSSATPGQEESEPKTGNRLHHEDSSSDSEDEVNGSGRSSNESRPTFYREDVQQPAT.

In terms of domain architecture, PH spans 35–131; that stretch reads VLVGEGVLVK…WMLHIERCVT (97 aa). An FYVE-type zinc finger spans residues 152 to 212; it reads DGEAVKCMVC…VCDHCFDSLS (61 aa). Cysteine 158, cysteine 161, cysteine 175, cysteine 178, cysteine 183, cysteine 186, cysteine 204, and cysteine 207 together coordinate Zn(2+). Residues 213 to 266 are disordered; that stretch reads SATPGQEESEPKTGNRLHHEDSSSDSEDEVNGSGRSSNESRPTFYREDVQQPAT. 2 stretches are compositionally biased toward basic and acidic residues: residues 221–234 and 256–266; these read SEPK…HEDS and FYREDVQQPAT.

This is an uncharacterized protein from Caenorhabditis elegans.